Here is a 181-residue protein sequence, read N- to C-terminus: Putative ankyrin repeat protein RF_0782 (181 aa).

ANK repeat units follow at residues 24–53 (YHYSPLATAASVGSVEIVEALLSKGADINF) and 54–83 (GSTPSFITAIKNGHLKICYLLKALGANTQI).

This Rickettsia felis (strain ATCC VR-1525 / URRWXCal2) (Rickettsia azadi) protein is Putative ankyrin repeat protein RF_0782.